The primary structure comprises 273 residues: 4-hydroxy-tetrahydrodipicolinate reductase (273 aa).

12–17 (GAGGRM) is an NAD(+) binding site. NADP(+) is bound at residue arginine 39. NAD(+)-binding positions include 102–104 (GTT) and 126–129 (AANF). Histidine 159 functions as the Proton donor/acceptor in the catalytic mechanism. Histidine 160 lines the (S)-2,3,4,5-tetrahydrodipicolinate pocket. Lysine 163 (proton donor) is an active-site residue. 169–170 (GT) contacts (S)-2,3,4,5-tetrahydrodipicolinate.

It belongs to the DapB family. Homotetramer.

The protein localises to the cytoplasm. The enzyme catalyses (S)-2,3,4,5-tetrahydrodipicolinate + NAD(+) + H2O = (2S,4S)-4-hydroxy-2,3,4,5-tetrahydrodipicolinate + NADH + H(+). It catalyses the reaction (S)-2,3,4,5-tetrahydrodipicolinate + NADP(+) + H2O = (2S,4S)-4-hydroxy-2,3,4,5-tetrahydrodipicolinate + NADPH + H(+). The protein operates within amino-acid biosynthesis; L-lysine biosynthesis via DAP pathway; (S)-tetrahydrodipicolinate from L-aspartate: step 4/4. Its function is as follows. Catalyzes the conversion of 4-hydroxy-tetrahydrodipicolinate (HTPA) to tetrahydrodipicolinate. This chain is 4-hydroxy-tetrahydrodipicolinate reductase, found in Sodalis glossinidius (strain morsitans).